We begin with the raw amino-acid sequence, 287 residues long: MGSLKEIKVRIASIRSTQKITAAMKMVSSAKFHHAQTQTEHTLTYANKLSAILNGLLSAECDLDSPYTEQRKVSKVAIAVFASSTGLCGTFNANIWKELSATIQTYKNQQIEVGLYPIGKKIADELHKAGYSFDTDFVTIGEKPSYESAVSLANRLMELFVTGKADRVELLYHHFKNMATQVVTHKTYLPLSLSDTEAAETATDYILEPSAEELRNRLFPKLLNLTIYTILLDTSTAEHAARMMAMQTANDNANDLIQQLTLQYNKTRQQAITNELLDIMGGAAVSS.

It belongs to the ATPase gamma chain family. As to quaternary structure, F-type ATPases have 2 components, CF(1) - the catalytic core - and CF(0) - the membrane proton channel. CF(1) has five subunits: alpha(3), beta(3), gamma(1), delta(1), epsilon(1). CF(0) has three main subunits: a, b and c.

It is found in the cell inner membrane. Functionally, produces ATP from ADP in the presence of a proton gradient across the membrane. The gamma chain is believed to be important in regulating ATPase activity and the flow of protons through the CF(0) complex. The sequence is that of ATP synthase gamma chain from Parabacteroides distasonis (strain ATCC 8503 / DSM 20701 / CIP 104284 / JCM 5825 / NCTC 11152).